Consider the following 171-residue polypeptide: Secretion monitor (171 aa).

A signal peptide spans 1-36 (MIGILNRWRQFGRRYFWPHLLLGMVAASLGLPTSLN).

This sequence belongs to the SecM family.

It is found in the cytoplasm. The protein localises to the cytosol. It localises to the periplasm. In terms of biological role, regulates secA expression by translational coupling of the secM secA operon. Translational pausing at a specific Pro residue 5 residues before the end of the protein may allow disruption of a mRNA repressor helix that normally suppresses secA translation initiation. This chain is Secretion monitor, found in Pectobacterium carotovorum subsp. carotovorum (strain PC1).